We begin with the raw amino-acid sequence, 233 residues long: MSVLAPDAVEGLFDQIAPIYDNLNDQLSFGLHRLWKRMAVKWSAAKPGDRVLDLCCGSGDLAFLLAKVVGSKGQVIGFDRSQALLSVAGDRARQLASALVIDWQRGDALDLPFPDDHFDAATLGYGLRNVPDIPTVLRQLQRVLKPGARAAILDMHRPYSPLLRQFQQVYLDRWVVPAAAAQNCAAEYEYIDASLEAFPQGQQQVALAIAAGFQRAKHYELAAGLMGVLVVEA.

It belongs to the class I-like SAM-binding methyltransferase superfamily. MenG/UbiE family.

The catalysed reaction is demethylphylloquinol + S-adenosyl-L-methionine = phylloquinol + S-adenosyl-L-homocysteine + H(+). Its pathway is cofactor biosynthesis; phylloquinone biosynthesis. Its function is as follows. Methyltransferase required for the conversion of 2-phytyl-1,4-beta-naphthoquinol to phylloquinol. In Synechococcus elongatus (strain ATCC 33912 / PCC 7942 / FACHB-805) (Anacystis nidulans R2), this protein is 2-phytyl-1,4-naphtoquinone methyltransferase.